Here is a 349-residue protein sequence, read N- to C-terminus: Micronemal protein 6 (349 aa).

An N-terminal signal peptide occupies residues 1 to 23 (MRLFRCCAAAVVAAESLLWLKNG). 3 EGF-like domains span residues 36-80 (IADN…VTCM), 96-134 (TPAACSSNPCGPEAAGTCKETNSGYICRCNQGYRISLDG), and 147-192 (GCEE…ITCK). 9 disulfides stabilise this stretch: Cys40/Cys53, Cys45/Cys62, Cys64/Cys79, Cys100/Cys113, Cys105/Cys122, Cys124/Cys140, Cys148/Cys162, Cys153/Cys173, and Cys175/Cys191. Residues 194–291 (VPPHYRKPPF…EEGSGHAGAI (98 aa)) are disordered. The acidic domain stretch occupies residues 204–283 (EFGKGGHPVD…SEEQGKEREE (80 aa)). 2 stretches are compositionally biased toward basic and acidic residues: residues 210–247 (HPVDSEPSKRQREDEGESREPESDSTEPGRDQERRTPL) and 276–285 (EQGKEREEGS). A helical transmembrane segment spans residues 290–310 (AIAGGVIGGLLLLSAAGAGVA).

As to quaternary structure, interacts directly with MIC1. Part of the MIC6-MIC1-MIC4 complex. Subject to proteolytic processing involving both the N-terminus and the C-terminus. The first EGF-like domain (EGF-like domain 1) is removed by proteolytic cleavage by ASP3 and is not present in the mature protein. Released as soluble 35 kDa protein after proteolytic processing at the C-terminus.

It localises to the cytoplasmic vesicle. It is found in the secretory vesicle. Its subcellular location is the microneme membrane. The protein resides in the secreted. Escorter protein required for import of MIC1 and MIC4 adhesins into the microneme. This Toxoplasma gondii protein is Micronemal protein 6.